A 394-amino-acid polypeptide reads, in one-letter code: Phosphoglycerate kinase (394 aa).

Substrate contacts are provided by residues 21 to 23 (DFN), arginine 36, 59 to 62 (HLGR), arginine 118, and arginine 151. Serine 183 carries the phosphoserine modification. Lysine 201 and glycine 292 together coordinate ATP. Threonine 299 carries the phosphothreonine modification. ATP contacts are provided by residues glutamate 323 and 350 to 353 (GGDS).

The protein belongs to the phosphoglycerate kinase family. As to quaternary structure, monomer.

Its subcellular location is the cytoplasm. It carries out the reaction (2R)-3-phosphoglycerate + ATP = (2R)-3-phospho-glyceroyl phosphate + ADP. It participates in carbohydrate degradation; glycolysis; pyruvate from D-glyceraldehyde 3-phosphate: step 2/5. The chain is Phosphoglycerate kinase from Anoxybacillus flavithermus (strain DSM 21510 / WK1).